A 198-amino-acid chain; its full sequence is NAD(P)H dehydrogenase (quinone) (198 aa).

The Flavodoxin-like domain occupies 4 to 189; the sequence is VLVLYYSMYG…SIARYQGEYV (186 aa). FMN-binding positions include 10-15 and 78-80; these read SMYGHI and TRF. NAD(+) is bound at residue Y12. W98 is a binding site for substrate. FMN-binding positions include 113 to 118 and H133; that span reads STGTGG.

It belongs to the WrbA family. The cofactor is FMN.

The catalysed reaction is a quinone + NADH + H(+) = a quinol + NAD(+). It carries out the reaction a quinone + NADPH + H(+) = a quinol + NADP(+). This Shigella dysenteriae serotype 1 (strain Sd197) protein is NAD(P)H dehydrogenase (quinone).